A 494-amino-acid polypeptide reads, in one-letter code: Cysteine--tRNA ligase (494 aa).

C29 contributes to the Zn(2+) binding site. A 'HIGH' region motif is present at residues 31–41 (LTVSDDAHLGH). Positions 187–220 (KAGGVSPDDANTHRDDELPPLDGERGQTWASPWG) are disordered. Residues 196–211 (ANTHRDDELPPLDGER) show a composition bias toward basic and acidic residues. Residues C230, H255, and E259 each contribute to the Zn(2+) site. Residues 287 to 291 (KMSSS) carry the 'KMSKS' region motif.

Belongs to the class-I aminoacyl-tRNA synthetase family. Zn(2+) serves as cofactor.

It localises to the cytoplasm. It carries out the reaction tRNA(Cys) + L-cysteine + ATP = L-cysteinyl-tRNA(Cys) + AMP + diphosphate. The polypeptide is Cysteine--tRNA ligase (Halobacterium salinarum (strain ATCC 700922 / JCM 11081 / NRC-1) (Halobacterium halobium)).